The primary structure comprises 103 residues: Small ribosomal subunit protein bS6c (103 aa).

It belongs to the bacterial ribosomal protein bS6 family.

It is found in the plastid. Its subcellular location is the chloroplast. Binds together with bS18 to 16S ribosomal RNA. In Thalassiosira pseudonana (Marine diatom), this protein is Small ribosomal subunit protein bS6c.